We begin with the raw amino-acid sequence, 71 residues long: Small ribosomal subunit protein bS18 (71 aa).

It belongs to the bacterial ribosomal protein bS18 family. In terms of assembly, part of the 30S ribosomal subunit. Forms a tight heterodimer with protein bS6.

In terms of biological role, binds as a heterodimer with protein bS6 to the central domain of the 16S rRNA, where it helps stabilize the platform of the 30S subunit. This Dichelobacter nodosus (strain VCS1703A) protein is Small ribosomal subunit protein bS18.